The chain runs to 106 residues: Large ribosomal subunit protein uL30 (106 aa).

The protein belongs to the universal ribosomal protein uL30 family. Part of the 50S ribosomal subunit.

The sequence is that of Large ribosomal subunit protein uL30 from Ruthia magnifica subsp. Calyptogena magnifica.